The sequence spans 1157 residues: DNA-directed RNA polymerase subunit beta (1157 aa).

It belongs to the RNA polymerase beta chain family. In terms of assembly, the RNAP catalytic core consists of 2 alpha, 1 beta, 1 beta' and 1 omega subunit. When a sigma factor is associated with the core the holoenzyme is formed, which can initiate transcription.

The enzyme catalyses RNA(n) + a ribonucleoside 5'-triphosphate = RNA(n+1) + diphosphate. Functionally, DNA-dependent RNA polymerase catalyzes the transcription of DNA into RNA using the four ribonucleoside triphosphates as substrates. This Tropheryma whipplei (strain TW08/27) (Whipple's bacillus) protein is DNA-directed RNA polymerase subunit beta.